The chain runs to 136 residues: MWARAVHLGLRAAARGRRGFTSKADPQGSGRVTGELIQHLERLSLVDFGSQEAVARLEKAIAFADRLRAVNTDGVEPMESVLEDRCLYLRSDNVVEGSCAEELLQNSHRVVEEYFVAPPGNISWSKLDEKQPFSHR.

The N-terminal 27 residues, 1-27 (MWARAVHLGLRAAARGRRGFTSKADPQ), are a transit peptide targeting the mitochondrion.

This sequence belongs to the GatC family. Subunit of the heterotrimeric GatCAB amidotransferase (AdT) complex, composed of A (QRSL1), B (GATB) and C (GATC) subunits.

It is found in the mitochondrion. It catalyses the reaction L-glutamyl-tRNA(Gln) + L-glutamine + ATP + H2O = L-glutaminyl-tRNA(Gln) + L-glutamate + ADP + phosphate + H(+). Allows the formation of correctly charged Gln-tRNA(Gln) through the transamidation of misacylated Glu-tRNA(Gln) in the mitochondria. The reaction takes place in the presence of glutamine and ATP through an activated gamma-phospho-Glu-tRNA(Gln). This is Glutamyl-tRNA(Gln) amidotransferase subunit C, mitochondrial from Bos taurus (Bovine).